The primary structure comprises 292 residues: MAEITAALVKELREKTDAPMMECKKALTEAEGDLARAEEILRVKLGNKASKAAARVTAEGLIGLYISADAKQGAVIEVNCETDFVAKNDDFVAFVNKLAELVTTQKPADVAALSALPLGEGTVETTRTALVGKIGENISVRRFERIETANALASYVHGGKIGVLVEYAGAEEVGKDLAMHIAATKPRALNADGVPAADIAAERSVAEQKAAESGKPAEIVAKMVEGSVQKFLKEVTLLSQPFVKNDKQTVEQMLKEKSASINKFVLFVVGEGIEKKTSDFAAEVAAAAAGRA.

Residues 82–85 (TDFV) are involved in Mg(2+) ion dislocation from EF-Tu.

This sequence belongs to the EF-Ts family.

It is found in the cytoplasm. Functionally, associates with the EF-Tu.GDP complex and induces the exchange of GDP to GTP. It remains bound to the aminoacyl-tRNA.EF-Tu.GTP complex up to the GTP hydrolysis stage on the ribosome. The sequence is that of Elongation factor Ts from Bordetella petrii (strain ATCC BAA-461 / DSM 12804 / CCUG 43448).